We begin with the raw amino-acid sequence, 185 residues long: Ribosome-recycling factor (185 aa).

Belongs to the RRF family.

Its subcellular location is the cytoplasm. Its function is as follows. Responsible for the release of ribosomes from messenger RNA at the termination of protein biosynthesis. May increase the efficiency of translation by recycling ribosomes from one round of translation to another. This chain is Ribosome-recycling factor, found in Laribacter hongkongensis (strain HLHK9).